A 697-amino-acid chain; its full sequence is Lebercilin (697 aa).

A disordered region spans residues 1–90; that stretch reads MGERAGSPGT…VGFRSQSLNR (90 aa). Phosphoserine occurs at positions 7 and 45. The segment covering 32-45 has biased composition (low complexity); sequence SSGRSSLVSSSPAS. 2 coiled-coil regions span residues 103–297 and 389–485; these read RILS…IKNI and EEKF…RNLK. Disordered regions lie at residues 412 to 432, 522 to 548, and 606 to 697; these read WERE…EREE, HHLQ…PASP, and EQLF…VALR. The span at 416–432 shows a compositional bias: basic and acidic residues; sequence ELDKKQKEKASLLEREE. Residues 527 to 547 are compositionally biased toward polar residues; it reads ISFSTPKGEGQNSGNVRSPAS. The span at 612–626 shows a compositional bias: low complexity; the sequence is SGSSTISSKSSDPNS. A compositionally biased stretch (acidic residues) spans 686–697; the sequence is SVEDEIEEVALR.

It belongs to the LCA5 family. Interacts with NINL. Interacts with OFD1. Interacts with FAM161A. Interacts with components of the IFT complex B. Widely expressed.

The protein resides in the cytoplasm. The protein localises to the cytoskeleton. It localises to the cilium axoneme. It is found in the cilium basal body. Its subcellular location is the microtubule organizing center. The protein resides in the centrosome. The protein localises to the cell projection. It localises to the cilium. In terms of biological role, involved in intraflagellar protein (IFT) transport in photoreceptor cilia. This chain is Lebercilin (LCA5), found in Homo sapiens (Human).